The following is a 177-amino-acid chain: Large ribosomal subunit protein bL9 (177 aa).

A disordered region spans residues Val-151–Ala-177.

The protein belongs to the bacterial ribosomal protein bL9 family.

Its function is as follows. Binds to the 23S rRNA. This is Large ribosomal subunit protein bL9 from Maridesulfovibrio salexigens (strain ATCC 14822 / DSM 2638 / NCIMB 8403 / VKM B-1763) (Desulfovibrio salexigens).